The sequence spans 216 residues: Cytidylate kinase (216 aa).

7–15 (GPSGTGKST) lines the ATP pocket.

The protein belongs to the cytidylate kinase family. Type 1 subfamily.

It is found in the cytoplasm. The catalysed reaction is CMP + ATP = CDP + ADP. It catalyses the reaction dCMP + ATP = dCDP + ADP. The protein is Cytidylate kinase of Chlamydia felis (strain Fe/C-56) (Chlamydophila felis).